We begin with the raw amino-acid sequence, 278 residues long: Polyamine aminopropyltransferase (278 aa).

Residues Glu-5–Lys-238 form the PABS domain. Gln-34 is an S-methyl-5'-thioadenosine binding site. Residues His-65 and Asp-89 each coordinate spermidine. Residues Glu-109 and Asp-140 to Gly-141 contribute to the S-methyl-5'-thioadenosine site. The Proton acceptor role is filled by Asp-158. Spermidine is bound at residue Asp-158 to Asp-161. Pro-165 is a binding site for S-methyl-5'-thioadenosine.

This sequence belongs to the spermidine/spermine synthase family. Homodimer or homotetramer.

It localises to the cytoplasm. The enzyme catalyses S-adenosyl 3-(methylsulfanyl)propylamine + putrescine = S-methyl-5'-thioadenosine + spermidine + H(+). The protein operates within amine and polyamine biosynthesis; spermidine biosynthesis; spermidine from putrescine: step 1/1. Functionally, catalyzes the irreversible transfer of a propylamine group from the amino donor S-adenosylmethioninamine (decarboxy-AdoMet) to putrescine (1,4-diaminobutane) to yield spermidine. This chain is Polyamine aminopropyltransferase, found in Caldicellulosiruptor saccharolyticus (strain ATCC 43494 / DSM 8903 / Tp8T 6331).